The chain runs to 454 residues: tRNA modification GTPase MnmE (454 aa).

The (6S)-5-formyl-5,6,7,8-tetrahydrofolate site is built by R23, E80, and K120. One can recognise a TrmE-type G domain in the interval 216–377 (GMKVVIAGRP…LRNHLKQSMG (162 aa)). Position 226 (N226) interacts with K(+). GTP-binding positions include 226–231 (NAGKSS), 245–251 (TDIAGTT), 270–273 (DTAG), 335–338 (NKAD), and 358–360 (SAR). Mg(2+) is bound at residue S230. K(+) is bound by residues T245, I247, and T250. Residue T251 coordinates Mg(2+). K454 lines the (6S)-5-formyl-5,6,7,8-tetrahydrofolate pocket.

It belongs to the TRAFAC class TrmE-Era-EngA-EngB-Septin-like GTPase superfamily. TrmE GTPase family. Homodimer. Heterotetramer of two MnmE and two MnmG subunits. Requires K(+) as cofactor.

Its subcellular location is the cytoplasm. In terms of biological role, exhibits a very high intrinsic GTPase hydrolysis rate. Involved in the addition of a carboxymethylaminomethyl (cmnm) group at the wobble position (U34) of certain tRNAs, forming tRNA-cmnm(5)s(2)U34. In Salmonella typhi, this protein is tRNA modification GTPase MnmE.